The sequence spans 140 residues: Ribosome-binding factor A (140 aa).

A disordered region spans residues 1–23; it reads MLRDRNRSGVRGGAEGPSQRQRR.

The protein belongs to the RbfA family. In terms of assembly, monomer. Binds 30S ribosomal subunits, but not 50S ribosomal subunits or 70S ribosomes.

The protein localises to the cytoplasm. One of several proteins that assist in the late maturation steps of the functional core of the 30S ribosomal subunit. Associates with free 30S ribosomal subunits (but not with 30S subunits that are part of 70S ribosomes or polysomes). Required for efficient processing of 16S rRNA. May interact with the 5'-terminal helix region of 16S rRNA. The protein is Ribosome-binding factor A of Acidiphilium cryptum (strain JF-5).